Reading from the N-terminus, the 356-residue chain is Uroporphyrinogen decarboxylase (356 aa).

Substrate is bound by residues arginine 25–arginine 29, aspartate 75, tyrosine 152, threonine 207, and histidine 326.

The protein belongs to the uroporphyrinogen decarboxylase family. As to quaternary structure, homodimer.

It localises to the cytoplasm. It carries out the reaction uroporphyrinogen III + 4 H(+) = coproporphyrinogen III + 4 CO2. It functions in the pathway porphyrin-containing compound metabolism; protoporphyrin-IX biosynthesis; coproporphyrinogen-III from 5-aminolevulinate: step 4/4. Its function is as follows. Catalyzes the decarboxylation of four acetate groups of uroporphyrinogen-III to yield coproporphyrinogen-III. The sequence is that of Uroporphyrinogen decarboxylase from Magnetococcus marinus (strain ATCC BAA-1437 / JCM 17883 / MC-1).